A 375-amino-acid chain; its full sequence is Succinyl-diaminopimelate desuccinylase (375 aa).

H66 serves as a coordination point for Zn(2+). D68 is a catalytic residue. Residue D99 participates in Zn(2+) binding. The Proton acceptor role is filled by E133. Residues E134, E162, and H348 each coordinate Zn(2+).

The protein belongs to the peptidase M20A family. DapE subfamily. As to quaternary structure, homodimer. The cofactor is Zn(2+). It depends on Co(2+) as a cofactor.

The catalysed reaction is N-succinyl-(2S,6S)-2,6-diaminopimelate + H2O = (2S,6S)-2,6-diaminopimelate + succinate. Its pathway is amino-acid biosynthesis; L-lysine biosynthesis via DAP pathway; LL-2,6-diaminopimelate from (S)-tetrahydrodipicolinate (succinylase route): step 3/3. Functionally, catalyzes the hydrolysis of N-succinyl-L,L-diaminopimelic acid (SDAP), forming succinate and LL-2,6-diaminopimelate (DAP), an intermediate involved in the bacterial biosynthesis of lysine and meso-diaminopimelic acid, an essential component of bacterial cell walls. In Stenotrophomonas maltophilia (strain R551-3), this protein is Succinyl-diaminopimelate desuccinylase.